Reading from the N-terminus, the 176-residue chain is dCTP deaminase (176 aa).

DCTP is bound by residues 99–104 (RSTLAR) and D115. Catalysis depends on E125, which acts as the Proton donor/acceptor. Q163 contacts dCTP.

It belongs to the dCTP deaminase family. In terms of assembly, homotrimer.

The enzyme catalyses dCTP + H2O + H(+) = dUTP + NH4(+). It participates in pyrimidine metabolism; dUMP biosynthesis; dUMP from dCTP (dUTP route): step 1/2. Catalyzes the deamination of dCTP to dUTP. The sequence is that of dCTP deaminase from Pyrobaculum calidifontis (strain DSM 21063 / JCM 11548 / VA1).